A 217-amino-acid chain; its full sequence is Adenylate kinase (217 aa).

11 to 16 lines the ATP pocket; that stretch reads GSGKGT. The interval 31–61 is NMP; sequence STGTMLRQALTRSTHKSYELHKNIMHTGDLV. Residues T32, R37, 59–61, 87–90, and Q94 each bind AMP; these read DLV and GFPR. The tract at residues 124–161 is LID; sequence GRRIHVGSGRTYHIKFNPPRNYGLDDITGEILTTRKDD. Residues R125 and 134 to 135 each bind ATP; that span reads TY. AMP is bound by residues R158 and R169. R202 serves as a coordination point for ATP.

This sequence belongs to the adenylate kinase family. Monomer.

The protein localises to the cytoplasm. It carries out the reaction AMP + ATP = 2 ADP. It participates in purine metabolism; AMP biosynthesis via salvage pathway; AMP from ADP: step 1/1. Its function is as follows. Catalyzes the reversible transfer of the terminal phosphate group between ATP and AMP. Plays an important role in cellular energy homeostasis and in adenine nucleotide metabolism. In Blochmanniella pennsylvanica (strain BPEN), this protein is Adenylate kinase.